The following is a 260-amino-acid chain: Hydroxyacylglutathione hydrolase (260 aa).

Zn(2+) contacts are provided by His66, His68, Asp70, His71, His125, Asp150, and His188.

Belongs to the metallo-beta-lactamase superfamily. Glyoxalase II family. Monomer. Zn(2+) serves as cofactor.

The enzyme catalyses an S-(2-hydroxyacyl)glutathione + H2O = a 2-hydroxy carboxylate + glutathione + H(+). It functions in the pathway secondary metabolite metabolism; methylglyoxal degradation; (R)-lactate from methylglyoxal: step 2/2. Functionally, thiolesterase that catalyzes the hydrolysis of S-D-lactoyl-glutathione to form glutathione and D-lactic acid. In Prochlorococcus marinus (strain MIT 9303), this protein is Hydroxyacylglutathione hydrolase.